The following is a 215-amino-acid chain: Protein slowmo (215 aa).

Positions 1-170 (MKIWTSEHIF…VIGLINTEVK (170 aa)) constitute a PRELI/MSF1 domain.

The protein belongs to the slowmo family. In terms of tissue distribution, expressed in specific tissues such as the developing central nervous system (CNS) and both the male and female germline. In the CNS, it is restricted in a subset of cells during embryogenesis and early larval development. In embryos, it is also expressed in salivary glands. In the testis, expressed in somatic cyst cells throughout the distal region where the mitotic cysts develop, extending through to meiotic cysts.

The protein localises to the mitochondrion. Functionally, required to regulate peristaltic movement and also for germline proliferation in males and females. The chain is Protein slowmo (slmo) from Drosophila melanogaster (Fruit fly).